The chain runs to 364 residues: Caffeic acid 3-O-methyltransferase (364 aa).

Residue 131–137 (MNQDKVL) participates in substrate binding. Residues 163–181 (AFEYHGTDSRFNRVFNEGM) form a substrate binding region. Residues G209, D232, D252, M253, and K266 each contribute to the S-adenosyl-L-methionine site. H270 (proton acceptor) is an active-site residue.

Belongs to the class I-like SAM-binding methyltransferase superfamily. Cation-independent O-methyltransferase family. COMT subfamily. As to quaternary structure, homodimer. Confined to the vascular tissues of organs undergoing lignification such as stems and roots.

The catalysed reaction is (E)-caffeate + S-adenosyl-L-methionine = (E)-ferulate + S-adenosyl-L-homocysteine + H(+). It catalyses the reaction tricetin + 2 S-adenosyl-L-methionine = 3',5'-di-O-methyltricetin + 2 S-adenosyl-L-homocysteine + 2 H(+). The enzyme catalyses luteolin + S-adenosyl-L-methionine = chrysoeriol + S-adenosyl-L-homocysteine + H(+). It carries out the reaction tricetin + S-adenosyl-L-methionine = 3'-O-methyltricetin + S-adenosyl-L-homocysteine + H(+). It functions in the pathway aromatic compound metabolism; phenylpropanoid biosynthesis. In terms of biological role, catalyzes the conversion of caffeic acid to ferulic acid and of 5-hydroxyferulic acid to sinapic acid. The resulting products may subsequently be converted to the corresponding alcohols that are incorporated into lignins. Can use the flavone tricetin (5,7,3',4',5'-pentahydroxyflavone) as the preferred substrate and give rise to its 3',5'-dimethyl derivative, tricin (3',5'-dimethoxy-5,7,4'-trihydroxyflavone), as the major product, and selgin to a lower extent. Tricin exhibits potential benefits for human health including relaxant effect on smooth muscle of intestinal tissues, antioxidant effect, antihistaminic activity, and growth inhibition of human malignant breast tumor cells and colon cancer cells. Can also use luteolin, quercetin and 5-hydroxyferulic acid (5HF) as substrates. The protein is Caffeic acid 3-O-methyltransferase of Zea mays (Maize).